The chain runs to 446 residues: MVPQAHGLLLLCFLLQLQGPLGTAVFITQEEAHGVLHRQRRANSLLEELWPGSLERECNEEQCSFEEAREIFKSPERTKQFWIVYSDGDQCASNPCQNGGTCQDHLKSYVCFCLLDFEGRNCEKSKNEQLICANENGDCDQYCRDHVGTKRTCSCHEDYTLQPDEVSCKPKVEYPCGRIPVVEKRNSSSRQGRIVGGNVCPKGECPWQAVLKINGLLLCGAVLLDARWIVTAAHCFDNIRYWGNITVVMGEHDFSEKDGDEQVRRVTQVIMPDKYIRGKINHDIALLRLHRPVTFTDYVVPLCLPEKSFSENTLARIRFSRVSGWGQLLDRGATALELMSIEVPRLMTQDCLEHAKHSSNTPKITENMFCAGYMDGTKDACKGDSGGPHATHYHGTWYLTGVVSWGEGCAAIGHIGVYTRVSQYIDWLVRHMDSKLQVGVFRLPLL.

A signal peptide spans 1 to 24 (MVPQAHGLLLLCFLLQLQGPLGTA). A propeptide spanning residues 25–41 (VFITQEEAHGVLHRQRR) is cleaved from the precursor. The Gla domain maps to 42 to 86 (ANSLLEELWPGSLERECNEEQCSFEEAREIFKSPERTKQFWIVYS). Glu47, Glu48, Glu55, Glu57, Glu60, Glu61, Glu66, Glu67, Glu70, and Glu76 each carry 4-carboxyglutamate. Cys58 and Cys63 are disulfide-bonded. Positions 87-123 (DGDQCASNPCQNGGTCQDHLKSYVCFCLLDFEGRNCE) constitute an EGF-like 1; calcium-binding domain. Intrachain disulfides connect Cys91–Cys102, Cys96–Cys111, Cys113–Cys122, Cys132–Cys143, Cys139–Cys153, Cys155–Cys168, Cys176–Cys303, Cys200–Cys205, Cys219–Cys235, and Cys351–Cys370. Ser93 carries an O-linked (Glc...) serine; alternate glycan. Ser93 carries O-linked (Xyl...) serine; alternate glycosylation. Asp104 is modified ((3R)-3-hydroxyaspartate). The 42-residue stretch at 128–169 (EQLICANENGDCDQYCRDHVGTKRTCSCHEDYTLQPDEVSCK) folds into the EGF-like 2 domain. N-linked (GlcNAc...) asparagine glycosylation is present at Asn186. One can recognise a Peptidase S1 domain in the interval 194-433 (IVGGNVCPKG…YIDWLVRHMD (240 aa)). His234 serves as the catalytic Charge relay system. An N-linked (GlcNAc...) asparagine glycan is attached at Asn244. The active-site Charge relay system is the Asp283. Residue Asp379 participates in substrate binding. Cys381 and Cys409 are disulfide-bonded. Ser385 acts as the Charge relay system in catalysis.

It belongs to the peptidase S1 family. Heterodimer of a light chain and a heavy chain linked by a disulfide bond. Post-translationally, the vitamin K-dependent, enzymatic carboxylation of some glutamate residues allows the modified protein to bind calcium. The iron and 2-oxoglutarate dependent 3-hydroxylation of aspartate and asparagine is (R) stereospecific within EGF domains. In terms of processing, can be either O-glucosylated or O-xylosylated at Ser-93 by POGLUT1. Plasma and liver.

It is found in the secreted. The enzyme catalyses Selective cleavage of Arg-|-Ile bond in factor X to form factor Xa.. Initiates the extrinsic pathway of blood coagulation. Serine protease that circulates in the blood in a zymogen form. Factor VII is converted to factor VIIa by factor Xa, factor XIIa, factor IXa, or thrombin by minor proteolysis. In the presence of tissue factor and calcium ions, factor VIIa then converts factor X to factor Xa by limited proteolysis. Factor VIIa also converts factor IX to factor IXa in the presence of tissue factor and calcium. This chain is Coagulation factor VII (F7), found in Mus musculus (Mouse).